The following is a 237-amino-acid chain: Probable GTP-binding protein EngB (237 aa).

The EngB-type G domain occupies 13 to 188 (TGYEIAFAGR…ASVMAGRLNY (176 aa)). Residues 21–28 (GRSNAGKS), 48–52 (GRTQM), 67–70 (DLPG), 134–137 (TKAD), and 167–169 (FSS) contribute to the GTP site. Positions 28 and 50 each coordinate Mg(2+). The segment covering 207–220 (DDLNDELMDQDETS) has biased composition (acidic residues). The tract at residues 207–237 (DDLNDELMDQDETSEFNTENIDDHLDQEPKI) is disordered. The span at 227–237 (IDDHLDQEPKI) shows a compositional bias: basic and acidic residues.

The protein belongs to the TRAFAC class TrmE-Era-EngA-EngB-Septin-like GTPase superfamily. EngB GTPase family. Mg(2+) serves as cofactor.

In terms of biological role, necessary for normal cell division and for the maintenance of normal septation. This is Probable GTP-binding protein EngB from Acinetobacter baylyi (strain ATCC 33305 / BD413 / ADP1).